We begin with the raw amino-acid sequence, 346 residues long: Phosphoribosylformylglycinamidine cyclo-ligase (346 aa).

Belongs to the AIR synthase family.

Its subcellular location is the cytoplasm. It carries out the reaction 2-formamido-N(1)-(5-O-phospho-beta-D-ribosyl)acetamidine + ATP = 5-amino-1-(5-phospho-beta-D-ribosyl)imidazole + ADP + phosphate + H(+). Its pathway is purine metabolism; IMP biosynthesis via de novo pathway; 5-amino-1-(5-phospho-D-ribosyl)imidazole from N(2)-formyl-N(1)-(5-phospho-D-ribosyl)glycinamide: step 2/2. In Synechococcus sp. (strain CC9311), this protein is Phosphoribosylformylglycinamidine cyclo-ligase.